The primary structure comprises 271 residues: Glutamate racemase (271 aa).

Substrate is bound by residues 10 to 11 (DS) and 42 to 43 (YG). C73 (proton donor/acceptor) is an active-site residue. Residue 74–75 (NT) participates in substrate binding. The active-site Proton donor/acceptor is C183. Substrate is bound at residue 184–185 (TH).

Belongs to the aspartate/glutamate racemases family.

The enzyme catalyses L-glutamate = D-glutamate. It functions in the pathway cell wall biogenesis; peptidoglycan biosynthesis. Its function is as follows. Provides the (R)-glutamate required for cell wall biosynthesis. The chain is Glutamate racemase from Streptococcus thermophilus (strain CNRZ 1066).